Here is a 662-residue protein sequence, read N- to C-terminus: Probable quinol oxidase subunit 1 (662 aa).

A run of 2 helical transmembrane segments spans residues 14–34 (WMITMAQIGAPFLVIGLIAVI) and 58–78 (LMYLICAVLMFVRGGIDALLL). H102 is a Fe(II)-heme a binding site. 8 helical membrane passes run 103–123 (GVIMIIFMAMPFVFGLWNVVV), 140–160 (ISFWLFFVGMILFNLSFIIGG), 187–207 (VAIQISGIGTLMTGINFFVTI), 228–248 (FITTLIVILAFPVFTVVLALM), 273–293 (FFWVWGHPEVYIVILPAFGIY), 311–331 (MVWATAGIAFLSFLVWVHHFF), 336–356 (GALINSFFSISTMLIGVPTGV), and 376–396 (MLFSLAFIPNFLLGGVTGVML). Cu cation-binding residues include H279, Y283, H328, and H329. The 1'-histidyl-3'-tyrosine (His-Tyr) cross-link spans 279–283 (HPEVY). H414 is a binding site for heme a3. The next 5 helical transmembrane spans lie at 415–435 (FHYTLVTGVVFACLAGLIFWY), 451–471 (CFWLFMIGFNVCFLPQFILGL), 492–512 (VISTIGALLMAVGFLFLVVSI), 586–605 (THTGVIMGIFMLLGGFFLIF), and 609–628 (IPAAICLVGILGSLVYQSFV). Fe(II)-heme a is bound at residue H416.

It belongs to the heme-copper respiratory oxidase family. The cofactor is Cu cation. It depends on ferriheme a as a cofactor. Heme A3. is required as a cofactor.

The protein resides in the cell membrane. The enzyme catalyses 2 a quinol + O2 = 2 a quinone + 2 H2O. Its pathway is energy metabolism; oxidative phosphorylation. In terms of biological role, catalyzes quinol oxidation with the concomitant reduction of oxygen to water. This chain is Probable quinol oxidase subunit 1 (qoxB), found in Staphylococcus haemolyticus (strain JCSC1435).